Reading from the N-terminus, the 474-residue chain is JmjC domain-containing protein F (474 aa).

Residues 247 to 269 form a disordered region; sequence KTKKQQQQQQTTTTTANNDNDNS. The span at 251–261 shows a compositional bias: low complexity; that stretch reads QQQQQQTTTTT. Residues 305–474 enclose the JmjC domain; the sequence is AYLAQHGLIE…LSLSFWFIKK (170 aa).

The chain is JmjC domain-containing protein F (jcdF) from Dictyostelium discoideum (Social amoeba).